Consider the following 609-residue polypeptide: UvrABC system protein C (609 aa).

The region spanning 15-92 (TGSGVYQMQD…IKQFRPRYNV (78 aa)) is the GIY-YIG domain. Residues 202-237 (DQVIIKLTERMEVASENLVFEEAAHYRDQIRQLRRL) enclose the UVR domain.

Belongs to the UvrC family. As to quaternary structure, interacts with UvrB in an incision complex.

It localises to the cytoplasm. The UvrABC repair system catalyzes the recognition and processing of DNA lesions. UvrC both incises the 5' and 3' sides of the lesion. The N-terminal half is responsible for the 3' incision and the C-terminal half is responsible for the 5' incision. In Coxiella burnetii (strain CbuG_Q212) (Coxiella burnetii (strain Q212)), this protein is UvrABC system protein C.